Reading from the N-terminus, the 509-residue chain is Maturase K (509 aa).

Belongs to the intron maturase 2 family. MatK subfamily.

The protein resides in the plastid. It localises to the chloroplast. Its function is as follows. Usually encoded in the trnK tRNA gene intron. Probably assists in splicing its own and other chloroplast group II introns. In Clematis florida (Asian virgin's bower), this protein is Maturase K.